The primary structure comprises 671 residues: DNA ligase (671 aa).

Residues 32 to 36, 81 to 82, and Glu-113 each bind NAD(+); these read DAEYD and SL. The N6-AMP-lysine intermediate role is filled by Lys-115. The NAD(+) site is built by Arg-136, Glu-173, Lys-290, and Lys-314. 4 residues coordinate Zn(2+): Cys-408, Cys-411, Cys-426, and Cys-432. The BRCT domain occupies 593–671; it reads EIDSPFAGKT…EAEMIRLLGA (79 aa).

It belongs to the NAD-dependent DNA ligase family. LigA subfamily. Mg(2+) is required as a cofactor. The cofactor is Mn(2+).

It catalyses the reaction NAD(+) + (deoxyribonucleotide)n-3'-hydroxyl + 5'-phospho-(deoxyribonucleotide)m = (deoxyribonucleotide)n+m + AMP + beta-nicotinamide D-nucleotide.. Functionally, DNA ligase that catalyzes the formation of phosphodiester linkages between 5'-phosphoryl and 3'-hydroxyl groups in double-stranded DNA using NAD as a coenzyme and as the energy source for the reaction. It is essential for DNA replication and repair of damaged DNA. The chain is DNA ligase from Salmonella heidelberg (strain SL476).